A 402-amino-acid polypeptide reads, in one-letter code: Zinc finger CCHC domain-containing protein 12 (402 aa).

Positions 308-341 (IDSPHNSRAQFPSTSGGSGYKNNGPGEMRRARKR) are disordered. The span at 311–322 (PHNSRAQFPSTS) shows a compositional bias: polar residues. The CCHC-type zinc finger occupies 345–362 (IRCSYCGEEGHSKETCDN).

The protein belongs to the ZCCHC12 family. Interacts with SMAD1 and CREB-binding protein (CBP). Forms a protein-DNA complex through its association with SMAD1.

Transcriptional coactivator in the bone morphogenetic protein (BMP)-signaling pathway. It positively modulates BMP signaling by interacting with SMAD1 and associating with CBP in the transcription complex. It contributes to the BMP-induced enhancement of cholinergic-neuron-specific gene expression. The chain is Zinc finger CCHC domain-containing protein 12 (ZCCHC12) from Homo sapiens (Human).